Consider the following 364-residue polypeptide: Probable endopolygalacturonase B (364 aa).

An N-terminal signal peptide occupies residues 1 to 20 (MHFFQSSLVAATMGAALVAA). A propeptide spanning residues 21-29 (APAADLETR) is cleaved from the precursor. Cysteine 32 and cysteine 47 are oxidised to a cystine. 2 N-linked (GlcNAc...) asparagine glycosylation sites follow: asparagine 138 and asparagine 141. PbH1 repeat units follow at residues 159–188 (SDHL…DVGS), 189–210 (STYI…AVNS), 211–231 (GEHI…SIGS), 240–261 (VNDV…RIKT), 269–291 (VTGV…VVQQ), and 303–324 (TNGV…TSSA). Residue aspartate 203 is the Proton donor of the active site. The cysteines at positions 205 and 221 are disulfide-linked. Histidine 225 is an active-site residue. Cysteine 331 and cysteine 336 form a disulfide bridge. The N-linked (GlcNAc...) asparagine glycan is linked to asparagine 338. The cysteines at positions 355 and 364 are disulfide-linked.

The protein belongs to the glycosyl hydrolase 28 family.

It localises to the secreted. It catalyses the reaction (1,4-alpha-D-galacturonosyl)n+m + H2O = (1,4-alpha-D-galacturonosyl)n + (1,4-alpha-D-galacturonosyl)m.. Functionally, involved in maceration and soft-rotting of plant tissue. Hydrolyzes the 1,4-alpha glycosidic bonds of de-esterified pectate in the smooth region of the plant cell wall. In Aspergillus fumigatus (strain ATCC MYA-4609 / CBS 101355 / FGSC A1100 / Af293) (Neosartorya fumigata), this protein is Probable endopolygalacturonase B (pgaB).